Consider the following 120-residue polypeptide: uncharacterized protein (120 aa).

The 92-residue stretch at 29–120 (QRQAAVLVPI…QVTPVVGIIP (92 aa)) folds into the Nudix hydrolase domain. The Nudix box motif lies at 67–89 (GAVDNSDATLIAAALREAQEEVA). Positions 83 and 87 each coordinate Mg(2+).

Belongs to the Nudix hydrolase family. PCD1 subfamily. The cofactor is Mn(2+). Mg(2+) serves as cofactor.

Probably mediates the hydrolysis of some nucleoside diphosphate derivatives. This is an uncharacterized protein from Klebsiella aerogenes (Enterobacter aerogenes).